Reading from the N-terminus, the 293-residue chain is Coatomer subunit epsilon-2 (293 aa).

The protein belongs to the COPE family. Oligomeric complex that consists of at least the alpha, beta, beta', gamma, delta, epsilon and zeta subunits.

It localises to the cytoplasm. It is found in the golgi apparatus membrane. The protein localises to the cytoplasmic vesicle. The protein resides in the COPI-coated vesicle membrane. Functionally, the coatomer is a cytosolic protein complex that binds to dilysine motifs and reversibly associates with Golgi non-clathrin-coated vesicles, which further mediate biosynthetic protein transport from the ER, via the Golgi up to the trans Golgi network. The coatomer complex is required for budding from Golgi membranes, and is essential for the retrograde Golgi-to-ER transport of dilysine-tagged proteins. This chain is Coatomer subunit epsilon-2, found in Arabidopsis thaliana (Mouse-ear cress).